The sequence spans 372 residues: Delta-type opioid receptor (372 aa).

The Extracellular segment spans residues 1 to 47; that stretch reads MEPVPSARAELQFSLLANVSDTFPSAFPSASANASGSPGARSASSLA. N-linked (GlcNAc...) asparagine glycans are attached at residues Asn-18 and Asn-33. The helical transmembrane segment at 48–75 threads the bilayer; that stretch reads LAIAITALYSAVCAVGLLGNVLVMFGIV. The Cytoplasmic segment spans residues 76-85; the sequence is RYTKLKTATN. A helical transmembrane segment spans residues 86-110; sequence IYIFNLALADALATSTLPFQSAKYL. At 111 to 122 the chain is on the extracellular side; sequence METWPFGELLCK. The cysteines at positions 121 and 198 are disulfide-linked. Residues 123 to 144 form a helical membrane-spanning segment; sequence AVLSIDYYNMFTSIFTLTMMSV. Topologically, residues 145-163 are cytoplasmic; sequence DRYIAVCHPVKALDFRTPA. The helical transmembrane segment at 164 to 186 threads the bilayer; it reads KAKLINICIWVLASGVGVPIMVM. The Extracellular segment spans residues 187-206; that stretch reads AVTQPRDGAVVCTLQFPSPS. A helical membrane pass occupies residues 207 to 238; that stretch reads WYWDTVTKICVFLFAFVVPILIITVCYGLMLL. Over 239 to 261 the chain is Cytoplasmic; that stretch reads RLRSVRLLSGSKEKDRSLRRITR. Residues 262–284 traverse the membrane as a helical segment; it reads MVLVVVGAFVVCWAPIHIFVIVW. Topologically, residues 285–299 are extracellular; the sequence is TLVDINRRDPLVVAA. Residues 300–321 traverse the membrane as a helical segment; that stretch reads LHLCIALGYANSSLNPVLYAFL. Over 322-372 the chain is Cytoplasmic; sequence DENFKRCFRQLCRAPCGGQEPGSLRRPRQATARERVTACTPSDGPGGGAAA. A lipid anchor (S-palmitoyl cysteine) is attached at Cys-333. The tract at residues 340 to 372 is disordered; sequence QEPGSLRRPRQATARERVTACTPSDGPGGGAAA.

The protein belongs to the G-protein coupled receptor 1 family. May form homooligomers. Forms a heterodimer with OPRM1. Interacts with GPRASP1. Interacts with RTP4; the interaction promotes cell surface localization of the OPRD1-OPRM1 heterodimer. Post-translationally, ubiquitinated. A basal ubiquitination seems not to be related to degradation. Ubiquitination is increased upon formation of OPRM1:OPRD1 oligomers leading to proteasomal degradation; the ubiquitination is diminished by RTP4. Detected in brain, brain stem and brain cortex.

It is found in the cell membrane. G-protein coupled receptor that functions as a receptor for endogenous enkephalins and for a subset of other opioids. Ligand binding causes a conformation change that triggers signaling via guanine nucleotide-binding proteins (G proteins) and modulates the activity of down-stream effectors, such as adenylate cyclase. Signaling leads to the inhibition of adenylate cyclase activity. Inhibits neurotransmitter release by reducing calcium ion currents and increasing potassium ion conductance. Plays a role in the perception of pain and in opiate-mediated analgesia. Plays a role in developing analgesic tolerance to morphine. The sequence is that of Delta-type opioid receptor (Oprd1) from Rattus norvegicus (Rat).